Consider the following 1088-residue polypeptide: Receptor-type guanylate cyclase gcy-17 (1088 aa).

Positions 1–20 (MLFLRLFIFTPFLILANCQA) are cleaved as a signal peptide. Over 21–480 (RRTIKVGLLF…PPDFVRDYLV (460 aa)) the chain is Extracellular. Asn33, Asn235, Asn251, Asn321, Asn381, Asn419, and Asn434 each carry an N-linked (GlcNAc...) asparagine glycan. The chain crosses the membrane as a helical span at residues 481 to 501 (IVIIIVMFLIFAVSAAVGAVF). The Cytoplasmic segment spans residues 502 to 1088 (YAIRQKRKEI…SMARSITPEI (587 aa)). The segment at 529-552 (SKKSKSEASQRSFASGPSTSTKLT) is disordered. The span at 535–552 (EASQRSFASGPSTSTKLT) shows a compositional bias: polar residues. In terms of domain architecture, Protein kinase spans 535–824 (EASQRSFASG…KGNLMDHVFN (290 aa)). Positions 826–854 (LETYASTLEEEVNERTKELVEEQKKSDVL) form a coiled coil. The Guanylate cyclase domain maps to 882–1012 (TIFFSDVVQF…DAVNTASRME (131 aa)). The tract at residues 1069–1088 (SNMRKRENTPSMARSITPEI) is disordered.

It belongs to the adenylyl cyclase class-4/guanylyl cyclase family. In terms of tissue distribution, expressed in PHA sensory neurons.

Its subcellular location is the cell membrane. The enzyme catalyses GTP = 3',5'-cyclic GMP + diphosphate. Guanylate cyclase involved in the production of the second messenger cGMP. The protein is Receptor-type guanylate cyclase gcy-17 of Caenorhabditis elegans.